Consider the following 460-residue polypeptide: Elongation factor 1-alpha (460 aa).

N,N,N-trimethylglycine is present on glycine 2. An N6,N6-dimethyllysine; alternate modification is found at lysine 3. Residue lysine 3 is modified to N6-methyllysine; alternate. Residues 6-241 (KTHINLVVIG…DAIDPPTRPT (236 aa)) form the tr-type G domain. The tract at residues 15 to 22 (GHVDSGKS) is G1. A GTP-binding site is contributed by 15–22 (GHVDSGKS). Lysine 31 bears the N6-methyllysine mark. The G2 stretch occupies residues 71-75 (GITID). The residue at position 80 (lysine 80) is an N6,N6,N6-trimethyllysine. The interval 92-95 (DAPG) is G3. Residues 92–96 (DAPGH) and 154–157 (NKMD) each bind GTP. Positions 154–157 (NKMD) are G4. The segment at 193 to 195 (SGF) is G5. Lysine 317 is subject to N6,N6-dimethyllysine; alternate. Position 317 is an N6-methyllysine; alternate (lysine 317). Lysine 391 is modified (N6-methyllysine).

Belongs to the TRAFAC class translation factor GTPase superfamily. Classic translation factor GTPase family. EF-Tu/EF-1A subfamily.

It is found in the cytoplasm. Its function is as follows. This protein promotes the GTP-dependent binding of aminoacyl-tRNA to the A-site of ribosomes during protein biosynthesis. This Coccidioides immitis (strain RS) (Valley fever fungus) protein is Elongation factor 1-alpha (TEF).